An 852-amino-acid polypeptide reads, in one-letter code: Serine/threonine-protein kinase pakB (852 aa).

Positions 1-334 (MEQSKRVSMM…NVGNKQDEEK (334 aa)) are disordered. Position 8 is a phosphoserine; by autocatalysis (serine 8). Residues 24-35 (SPPPNRKPPPPN) show a composition bias toward pro residues. Over residues 44 to 56 (SSLNSSGSSFVSP) the composition is skewed to low complexity. Pro residues predominate over residues 57 to 74 (SPSPSPSPQQPVKRPLPS). Low complexity-rich tracts occupy residues 90–117 (RPQQ…NSNG) and 124–163 (FSSS…GSSN). Residues 181–191 (TPPPPPQPTPS) are compositionally biased toward pro residues. A compositionally biased stretch (polar residues) spans 201-210 (ASHNNTQHNI). 2 stretches are compositionally biased toward low complexity: residues 246–270 (SPGS…STPI) and 293–317 (SNSN…ATTS). Positions 356-369 (VGSPFNVKHNIHVN) constitute a CRIB domain. The segment covering 419–433 (AQQEQQALMQKQMQQ) has biased composition (low complexity). A disordered region spans residues 419 to 526 (AQQEQQALMQ…GILSQQQEQQ (108 aa)). Basic residues predominate over residues 470–485 (PQHHHQQQPPQQHHHQ). The span at 486–514 (QQQQQHNNNNNNNNNNNNNNNNQQSAQQQ) shows a compositional bias: low complexity. A Protein kinase domain is found at 570-823 (GEGSTKIGEG…AKVLLNHPFL (254 aa)). ATP-binding positions include 576 to 584 (IGEGAAGEV) and lysine 599. The active-site Proton acceptor is aspartate 691.

Belongs to the protein kinase superfamily. STE Ser/Thr protein kinase family. STE20 subfamily. In terms of assembly, interacts with rac1A, rac1B, rac1C, racA, racB, racC and racF1. Requires Mg(2+) as cofactor. Autophosphorylated at Ser-8. This may stimulate interaction with GTP-bound Rac family members which then further stimulates autophosphorylation and kinase activity.

It is found in the membrane. The protein resides in the cytoplasm. Its subcellular location is the cytoskeleton. It carries out the reaction L-seryl-[protein] + ATP = O-phospho-L-seryl-[protein] + ADP + H(+). The catalysed reaction is L-threonyl-[protein] + ATP = O-phospho-L-threonyl-[protein] + ADP + H(+). Its function is as follows. Regulator of the myosin I component of the cytoskeleton: required for regulation of cytokinesis, phagocytosis and pinocytosis. The protein is Serine/threonine-protein kinase pakB of Dictyostelium discoideum (Social amoeba).